Reading from the N-terminus, the 162-residue chain is NADH-quinone oxidoreductase subunit I (162 aa).

4Fe-4S ferredoxin-type domains are found at residues 53-83 and 93-122; these read LRRYPNGEERCIACKLCEAVCPAMAITIESE and TRYDIDLTKCIFCGFCEESCPVDSIVETHI. The [4Fe-4S] cluster site is built by C63, C66, C69, C73, C102, C105, C108, and C112.

The protein belongs to the complex I 23 kDa subunit family. As to quaternary structure, NDH-1 is composed of 14 different subunits. Subunits NuoA, H, J, K, L, M, N constitute the membrane sector of the complex. [4Fe-4S] cluster serves as cofactor.

It is found in the cell inner membrane. The catalysed reaction is a quinone + NADH + 5 H(+)(in) = a quinol + NAD(+) + 4 H(+)(out). NDH-1 shuttles electrons from NADH, via FMN and iron-sulfur (Fe-S) centers, to quinones in the respiratory chain. The immediate electron acceptor for the enzyme in this species is believed to be ubiquinone. Couples the redox reaction to proton translocation (for every two electrons transferred, four hydrogen ions are translocated across the cytoplasmic membrane), and thus conserves the redox energy in a proton gradient. The polypeptide is NADH-quinone oxidoreductase subunit I (Herminiimonas arsenicoxydans).